The chain runs to 534 residues: 5'-nucleotidase domain-containing protein 3 (534 aa).

Asp104 serves as the catalytic Nucleophile. The Mg(2+) site is built by Asp104 and Asp106. Asp106 functions as the Proton donor in the catalytic mechanism. A substrate-binding site is contributed by 234 to 242 (KEAIRDVHV). Asp372 contacts Mg(2+).

It belongs to the 5'(3')-deoxyribonucleotidase family. Requires Mg(2+) as cofactor.

This Xenopus tropicalis (Western clawed frog) protein is 5'-nucleotidase domain-containing protein 3 (nt5dc3).